A 24-amino-acid polypeptide reads, in one-letter code: Brevinin-1Ra (24 aa).

Residues C18 and C24 are joined by a disulfide bond.

In terms of tissue distribution, expressed by the skin glands.

Its subcellular location is the secreted. Antimicrobial peptide. The protein is Brevinin-1Ra of Pelophylax ridibundus (Marsh frog).